We begin with the raw amino-acid sequence, 174 residues long: 3-hydroxydecanoyl-[acyl-carrier-protein] dehydratase (174 aa).

Histidine 73 is an active-site residue.

Belongs to the thioester dehydratase family. FabA subfamily. In terms of assembly, homodimer.

The protein resides in the cytoplasm. The enzyme catalyses a (3R)-hydroxyacyl-[ACP] = a (2E)-enoyl-[ACP] + H2O. The catalysed reaction is (3R)-hydroxydecanoyl-[ACP] = (2E)-decenoyl-[ACP] + H2O. It catalyses the reaction (2E)-decenoyl-[ACP] = (3Z)-decenoyl-[ACP]. It functions in the pathway lipid metabolism; fatty acid biosynthesis. Its function is as follows. Necessary for the introduction of cis unsaturation into fatty acids. Catalyzes the dehydration of (3R)-3-hydroxydecanoyl-ACP to E-(2)-decenoyl-ACP and then its isomerization to Z-(3)-decenoyl-ACP. Can catalyze the dehydratase reaction for beta-hydroxyacyl-ACPs with saturated chain lengths up to 16:0, being most active on intermediate chain length. The protein is 3-hydroxydecanoyl-[acyl-carrier-protein] dehydratase of Cellvibrio japonicus (strain Ueda107) (Pseudomonas fluorescens subsp. cellulosa).